The sequence spans 121 residues: Putative iron-sulfur cluster insertion protein ErpA (121 aa).

Residues Cys-49, Cys-113, and Cys-115 each contribute to the iron-sulfur cluster site.

Belongs to the HesB/IscA family. Homodimer. Requires iron-sulfur cluster as cofactor.

Its function is as follows. Required for insertion of 4Fe-4S clusters. In Methylibium petroleiphilum (strain ATCC BAA-1232 / LMG 22953 / PM1), this protein is Putative iron-sulfur cluster insertion protein ErpA.